We begin with the raw amino-acid sequence, 173 residues long: T-cell receptor beta-1 chain C region (173 aa).

Residues E1–E146 form a c region region. A disulfide bridge connects residues C31 and C71. N67 and N116 each carry an N-linked (GlcNAc...) asparagine glycan. Residues E146–M167 traverse the membrane as a helical segment. At V168–S173 the chain is on the cytoplasmic side.

It is found in the membrane. In Mus musculus (Mouse), this protein is T-cell receptor beta-1 chain C region.